The following is a 202-amino-acid chain: MRLWLVRHGETEANVAGLYSGHAPTPLTEKGIGQAKTLHTLLRHAPFDRVLCSELERARHTARLVLEGRDTPQHILPELNEMYFVDWEMRHHRDLTHEDAESYAAWCTDWQNAVPTNGEGFQAFTRRVERFISRLGAFSDCQNLLIVSHQGVLSLLIARLLAMPAASLWHFRVEQGCWSTIDICEGFATLKVLNSRAVWRPE.

The active-site Tele-phosphohistidine intermediate is His8. Catalysis depends on Glu81, which acts as the Proton donor/acceptor.

It belongs to the phosphoglycerate mutase family.

It carries out the reaction adenosylcob(III)alamin 5'-phosphate + H2O = adenosylcob(III)alamin + phosphate. The catalysed reaction is alpha-ribazole 5'-phosphate + H2O = alpha-ribazole + phosphate. Its pathway is nucleoside biosynthesis; alpha-ribazole biosynthesis; alpha-ribazole from 5,6-dimethylbenzimidazole: step 2/2. In terms of biological role, catalyzes the conversion of adenosylcobalamin 5'-phosphate to adenosylcobalamin (vitamin B12); involved in the assembly of the nucleotide loop of cobalamin. Also catalyzes the hydrolysis of the phospho group from alpha-ribazole 5'-phosphate to form alpha-ribazole. The protein is Adenosylcobalamin/alpha-ribazole phosphatase (cobC) of Salmonella typhi.